Reading from the N-terminus, the 177-residue chain is UPF0251 protein Cag_0886 (177 aa).

The interval 147–177 (GGCLSDEESDEQENEQRTVGYPESEEELEIE) is disordered.

The protein belongs to the UPF0251 family.

The sequence is that of UPF0251 protein Cag_0886 from Chlorobium chlorochromatii (strain CaD3).